The chain runs to 102 residues: Movement protein (102 aa).

Residues valine 43–phenylalanine 63 form a helical membrane-spanning segment. The tract at residues isoleucine 82–valine 102 is disordered.

This sequence belongs to the mastrevirus movement protein family. Interacts with the capsid protein (CP). Part of a MP-CP-viral DNA complex.

The protein resides in the host membrane. Its function is as follows. Involved in the viral transport within, and between cells. The sequence is that of Movement protein from Tobacco yellow dwarf virus (strain Australia) (TYDV).